Reading from the N-terminus, the 278-residue chain is Shikimate dehydrogenase (NADP(+)) (278 aa).

Residues 19–21 (SRS) and Thr-66 contribute to the shikimate site. Lys-70 acts as the Proton acceptor in catalysis. Shikimate is bound by residues Asn-91 and Asp-106. NADP(+) contacts are provided by residues 129 to 133 (GAGGA) and Phe-221. Shikimate is bound at residue Tyr-223. Gly-242 contacts NADP(+).

It belongs to the shikimate dehydrogenase family. Homodimer.

It carries out the reaction shikimate + NADP(+) = 3-dehydroshikimate + NADPH + H(+). It functions in the pathway metabolic intermediate biosynthesis; chorismate biosynthesis; chorismate from D-erythrose 4-phosphate and phosphoenolpyruvate: step 4/7. In terms of biological role, involved in the biosynthesis of the chorismate, which leads to the biosynthesis of aromatic amino acids. Catalyzes the reversible NADPH linked reduction of 3-dehydroshikimate (DHSA) to yield shikimate (SA). The chain is Shikimate dehydrogenase (NADP(+)) from Anaeromyxobacter dehalogenans (strain 2CP-C).